The following is a 310-amino-acid chain: Mitochondrial 2-oxodicarboxylate carrier 1 (310 aa).

6 helical membrane-spanning segments follow: residues 9-29, 78-97, 126-146, 179-199, 219-239, and 281-301; these read LPFI…LLVM, SHLY…KRAI, IYSG…FELV, GLEA…GIIF, LIAG…FDVV, and MRLA…MDFF. Solcar repeat units lie at residues 9–108, 120–204, and 213–300; these read LPFI…FQTF, MTQK…IRKL, and EKTR…VMDF.

The protein belongs to the mitochondrial carrier (TC 2.A.29) family.

The protein resides in the mitochondrion inner membrane. Its function is as follows. Transports C5-C7 oxodicarboxylates across the inner membranes of mitochondria. Can transport 2-oxoadipate, 2-oxoglutarate, adipate, glutarate, 2-oxopimelate, oxaloacetate, citrate and malate. The main physiological role is probably to supply 2-oxoadipate and 2-oxoglutarate from the mitochondrial matrix to the cytosol where they are used in the biosynthesis of lysine and glutamate, respectively, and in lysine catabolism. This Saccharomyces cerevisiae (strain ATCC 204508 / S288c) (Baker's yeast) protein is Mitochondrial 2-oxodicarboxylate carrier 1 (ODC1).